We begin with the raw amino-acid sequence, 61 residues long: Large ribosomal subunit protein bL28 (61 aa).

A disordered region spans residues 1-27; the sequence is MAKDFVTGKKTTFGNTRSHALNSSSRS. Residues 9-27 are compositionally biased toward polar residues; sequence KKTTFGNTRSHALNSSSRS.

The protein belongs to the bacterial ribosomal protein bL28 family.

The sequence is that of Large ribosomal subunit protein bL28 from Lactobacillus delbrueckii subsp. bulgaricus (strain ATCC 11842 / DSM 20081 / BCRC 10696 / JCM 1002 / NBRC 13953 / NCIMB 11778 / NCTC 12712 / WDCM 00102 / Lb 14).